We begin with the raw amino-acid sequence, 436 residues long: POU domain, class 2, transcription factor 3 (436 aa).

Disordered stretches follow at residues 1-40 (MVNLESMHTDIKMSGDVADSTDARSTLSQVEPGNDRNGLD), 140-186 (QTGP…DEPS), and 256-278 (AESSPSDPSVSTPSSYPSLSEVF). The POU-specific domain maps to 183–257 (DEPSDLEELE…LLEKWLNDAE (75 aa)). Over residues 258–275 (SSPSDPSVSTPSSYPSLS) the composition is skewed to low complexity. The segment at residues 281 to 340 (KRKKRTSIETNIRLTLEKRFQDNPKPSSEEISMIAEQLSMEKEVVRVWFCNRRQKEKRIN) is a DNA-binding region (homeobox). Residues 363–421 (LGPLSVPPVHSTMPGTVTSSCSPGNNSRPSSPGSGLHASSPTASQNNSKAAVNSASSFN) form a disordered region. Composition is skewed to low complexity over residues 381–397 (SSCSPGNNSRPSSPGSG) and 405–421 (ASQNNSKAAVNSASSFN).

It belongs to the POU transcription factor family. Class-2 subfamily. In terms of assembly, interacts (via the POU domain) with POU2AF1 and POU2AF2 in a DNA-dependent manner; this interaction recruits POU2AF2 to chromatin and increases POU2F3 transactivation activity. Specifically expressed in epidermis and cultured keratinocytes.

It is found in the nucleus. Transcription factor that binds to the octamer motif (5'-ATTTGCAT-3') and regulates cell type-specific differentiation pathways. Involved in the regulation of keratinocytes differentiation. The POU2F3-POU2AF2/POU2AF3 complex drives the expression of tuft-cell-specific genes, a rare chemosensory cells that coordinate immune and neural functions within mucosal epithelial tissues. This Homo sapiens (Human) protein is POU domain, class 2, transcription factor 3.